The chain runs to 334 residues: D-fructose 1,6-bisphosphatase class 2/sedoheptulose 1,7-bisphosphatase (334 aa).

Mn(2+) is bound by residues aspartate 33, glutamate 57, aspartate 85, and glutamate 88. Residues glutamate 88–threonine 90, tyrosine 119, arginine 164–arginine 166, and aspartate 186–aspartate 188 contribute to the substrate site. Glutamate 213 is a Mn(2+) binding site.

Belongs to the FBPase class 2 family. As to quaternary structure, homotetramer. Mn(2+) serves as cofactor.

The catalysed reaction is beta-D-fructose 1,6-bisphosphate + H2O = beta-D-fructose 6-phosphate + phosphate. The enzyme catalyses D-sedoheptulose 1,7-bisphosphate + H2O = D-sedoheptulose 7-phosphate + phosphate. Its pathway is carbohydrate biosynthesis; Calvin cycle. In terms of biological role, catalyzes the hydrolysis of fructose 1,6-bisphosphate (Fru 1,6-P2) and sedoheptulose 1,7-bisphosphate (Sed 1,7-P2) to fructose 6-phosphate and sedoheptulose 7-phosphate, respectively. In Synechococcus sp. (strain CC9605), this protein is D-fructose 1,6-bisphosphatase class 2/sedoheptulose 1,7-bisphosphatase.